The chain runs to 504 residues: Maturase K (504 aa).

It belongs to the intron maturase 2 family. MatK subfamily.

It is found in the plastid. The protein localises to the chloroplast. Functionally, usually encoded in the trnK tRNA gene intron. Probably assists in splicing its own and other chloroplast group II introns. In Lepidium campestre (Field pepperwort), this protein is Maturase K.